The following is a 2530-amino-acid chain: Agglutinin-like protein 2 (2530 aa).

Residues Met1–Ala17 form the signal peptide. 4 cysteine pairs are disulfide-bonded: Cys73–Cys150, Cys96–Cys112, Cys205–Cys297, and Cys227–Cys256. Asn253 and Asn315 each carry an N-linked (GlcNAc...) asparagine glycan. 6 ALS repeats span residues Thr364–Pro395, Thr400–Pro431, Val437–Pro468, Val473–Pro504, Val509–Pro540, and Val545–Pro576. Asn578 carries an N-linked (GlcNAc...) asparagine glycan. One copy of the ALS 7 repeat lies at Val581–Pro612. N-linked (GlcNAc...) asparagine glycosylation is present at Asn614. 7 ALS repeats span residues Val617–Pro648, Val653–Pro684, Val689–Pro720, Val725–Pro756, Val761–Pro792, Val797–Pro828, and Val833–Pro864. Residue Asn866 is glycosylated (N-linked (GlcNAc...) asparagine). ALS repeat units follow at residues Val869–Pro900, Val905–Pro936, Val941–Pro972, and Val977–Pro1008. The span at Thr954–Val967 shows a compositional bias: low complexity. Residues Thr954–Pro975 form a disordered region. N-linked (GlcNAc...) asparagine glycosylation is present at Asn1010. ALS repeat units lie at residues Val1013–Pro1044, Val1049–Ile1077, Val1085–Pro1116, and Val1121–Pro1152. The N-linked (GlcNAc...) asparagine glycan is linked to Asn1154. 6 ALS repeats span residues Val1157 to Pro1188, Val1193 to Pro1224, Val1229 to Pro1260, Val1265 to Pro1296, Val1301 to Pro1332, and Val1337 to Pro1368. An N-linked (GlcNAc...) asparagine glycan is attached at Asn1370. The ALS 29 repeat unit spans residues Val1373–Pro1404. Asn1406 is a glycosylation site (N-linked (GlcNAc...) asparagine). An ALS 30 repeat occupies Val1409–Pro1440. Residue Asn1442 is glycosylated (N-linked (GlcNAc...) asparagine). 2 ALS repeats span residues Val1445–Pro1476 and Val1481–Pro1512. Asn1514 is a glycosylation site (N-linked (GlcNAc...) asparagine). An ALS 33 repeat occupies Val1517–Pro1548. Residue Asn1550 is glycosylated (N-linked (GlcNAc...) asparagine). One copy of the ALS 34 repeat lies at Val1553–Pro1584. A glycan (N-linked (GlcNAc...) asparagine) is linked at Asn1586. An ALS 35 repeat occupies Val1589–Pro1620. Asn1622 is a glycosylation site (N-linked (GlcNAc...) asparagine). An ALS 36 repeat occupies Val1625–Pro1656. A glycan (N-linked (GlcNAc...) asparagine) is linked at Asn1658. 2 ALS repeats span residues Val1661–Pro1692 and Val1697–Pro1728. Asn1730 is a glycosylation site (N-linked (GlcNAc...) asparagine). Residues Val1733–Pro1764 form an ALS 39 repeat. Residue Asn1766 is glycosylated (N-linked (GlcNAc...) asparagine). 2 ALS repeats span residues Val1769–Pro1800 and Val1805–Pro1836. Residue Asn1838 is glycosylated (N-linked (GlcNAc...) asparagine). 2 ALS repeats span residues Val1841–Pro1872 and Val1877–Glu1907. Residue Asn1910 is glycosylated (N-linked (GlcNAc...) asparagine). 2 ALS repeats span residues Val1913–Pro1944 and Val1949–Pro1980. Asn1982 is a glycosylation site (N-linked (GlcNAc...) asparagine). ALS repeat units follow at residues Val1985–Pro2016, Val2021–Pro2052, and Val2057–Pro2088. N-linked (GlcNAc...) asparagine glycosylation is present at Asn2090. ALS repeat units follow at residues Val2093–Pro2124 and Val2129–Ile2157. Residue Asn2197 is glycosylated (N-linked (GlcNAc...) asparagine). Disordered stretches follow at residues Val2200–Asn2235 and Thr2274–Thr2494. Over residues Pro2204–Ser2233 the composition is skewed to low complexity. Asn2281 carries N-linked (GlcNAc...) asparagine glycosylation. The segment covering Gly2282–Ser2296 has biased composition (low complexity). 2 stretches are compositionally biased toward polar residues: residues Ser2329–Ala2420 and Asn2429–Ile2452. N-linked (GlcNAc...) asparagine glycosylation is found at Asn2444 and Asn2466. Composition is skewed to low complexity over residues Gln2453–Pro2471 and Ser2482–Thr2494. Asp2507 carries the GPI-anchor amidated aspartate lipid modification. A propeptide spans Gly2508–Phe2530 (removed in mature form).

The protein belongs to the ALS family. Post-translationally, N-glycosylated and O-glycosylated. The GPI-anchor is attached to the protein in the endoplasmic reticulum and serves to target the protein to the cell surface. There, the glucosamine-inositol phospholipid moiety is cleaved off and the GPI-modified mannoprotein is covalently attached via its lipidless GPI glycan remnant to the 1,6-beta-glucan of the outer cell wall layer.

The protein resides in the cell membrane. Its subcellular location is the secreted. It is found in the cell wall. Functionally, cell surface adhesion protein which mediates both yeast-to-host tissue adherence and yeast aggregation. Plays an important role in the pathogenesis of C.albicans infections. This is Agglutinin-like protein 2 (ALS2) from Candida albicans (strain SC5314 / ATCC MYA-2876) (Yeast).